Reading from the N-terminus, the 710-residue chain is TRP-like ion channel pkd2 (710 aa).

Residues 1–23 (MRLWRSPLLLLVVVVELFSWADA) form the signal peptide. 9 helical membrane passes run 173–193 (WVMCMVIGIPLLIFLLISPVL), 197–217 (ALWEIVETMITLFQFAQIQAL), 322–342 (FFATGFSFFIILLFFSLLVAM), 376–396 (FFYRVIFVGFTQMSVLSMWEI), 404–424 (LAFLSMYVIVDMAVLLCYAFV), 466–486 (FFYFTFPLLLITLVRSMFIGF), 492–512 (KVQGCAMFGISVVVFALMVIL), 525–545 (IGVALMNLISGSFILVMCQAF), and 555–575 (IGIIFFALNAITMLLLILGIF). Phosphoserine is present on residues serine 599 and serine 632. Positions 689-710 (RISENNNNAERRRKPLPNNAFR) are disordered.

This sequence belongs to the transient receptor potential (TRP) ion channel family. Interacts with rho1.

It localises to the cell membrane. The protein localises to the golgi apparatus membrane. Functionally, acts as a key signaling component in the regulation of cell shape and cell wall synthesis through interaction with GTPase Rho1. The sequence is that of TRP-like ion channel pkd2 (pkd2) from Schizosaccharomyces pombe (strain 972 / ATCC 24843) (Fission yeast).